The sequence spans 239 residues: Myogenic factor 6 (239 aa).

Residues 27 to 64 (QHLDMPGVSPLYDGNHSPLSPGPDNVPSETGGESSGDE) form a disordered region. Positions 96-147 (DRRKAATLRERRRLKKINEAFDALKRKSVANPNQRLPKVEILRSAISYIERL) constitute a bHLH domain. Positions 155 to 184 (DEQERGQSGASDTRNDKEQNRPSGGDYCWK) are disordered.

As to quaternary structure, efficient DNA binding requires dimerization with another bHLH protein.

It is found in the nucleus. Involved in muscle differentiation (myogenic factor). Induces fibroblasts to differentiate into myoblasts. Probable sequence specific DNA-binding protein. This is Myogenic factor 6 (myf6) from Tetraodon nigroviridis (Spotted green pufferfish).